The chain runs to 1312 residues: uncharacterized protein (1312 aa).

A signal peptide spans 1-20 (MRNNLIYTMFLSCLHFETFC). A compositionally biased stretch (low complexity) spans 299–344 (TTTSSSTMLSSTTLLTTETETRESSSTGSTQTTTPSTEPSTTITTP). 8 disordered regions span residues 299-503 (TTTS…TTTY), 565-609 (EITS…PTGG), 645-692 (KETR…PTGG), 749-775 (SSSS…PTGG), 812-864 (KTRT…GGTT), 899-942 (KTRT…PTGG), 1048-1079 (KTRT…TGGT), and 1114-1165 (NTTR…TLET). Over residues 345 to 357 (MEQSSTVSSVQKT) the composition is skewed to polar residues. A compositionally biased stretch (low complexity) spans 365–503 (SSSTTVPTSA…STPATPTTTY (139 aa)). Residues 565–574 (EITSDAEGCK) show a composition bias toward basic and acidic residues. Positions 576-609 (TSSTPTPSSTSVHSTTATPSTTPGTTTYNWPTGG) are enriched in low complexity. Residues 645-659 (KETRTETTTDADGCK) are compositionally biased toward basic and acidic residues. The span at 660-692 (KTSSTSSSTPSLKHSTTPTPTPGTTTYNWPTGG) shows a compositional bias: low complexity. The span at 813-825 (TRTETTTDAEGCK) shows a compositional bias: basic and acidic residues. Over residues 826-864 (KTSSTSKISTTPTSPTSSKPTPTSTSMTTTYNWPTGGTT) the composition is skewed to low complexity. A compositionally biased stretch (polar residues) spans 899 to 908 (KTRTETTTDA). A compositionally biased stretch (low complexity) spans 914–942 (TSSTSLKPTSPSSSTASPPTTTYNWPTGG). Residues 1048–1057 (KTRTETTSDA) show a composition bias toward polar residues. Positions 1063–1076 (TSTTQTPTTFNWPT) are enriched in low complexity. Residues 1114 to 1123 (NTTRTETTSD) are compositionally biased toward polar residues. Low complexity predominate over residues 1130–1154 (TSSGTTSTMSPGTTGGTTVSRTTNS). A compositionally biased stretch (polar residues) spans 1155–1164 (NNPIDSSTLE). In terms of domain architecture, Sushi spans 1239–1306 (ATCSSLNLNL…WSGTPEKCVA (68 aa)). Disulfide bonds link Cys1241/Cys1291 and Cys1273/Cys1304.

It is found in the secreted. This is an uncharacterized protein from Caenorhabditis elegans.